A 183-amino-acid chain; its full sequence is RNA 2',3'-cyclic phosphodiesterase (183 aa).

H44 functions as the Proton donor in the catalytic mechanism. Short sequence motifs (HXTX) lie at residues 44-47 (HITL) and 130-133 (HMTL). H130 serves as the catalytic Proton acceptor.

It belongs to the 2H phosphoesterase superfamily. ThpR family.

The catalysed reaction is a 3'-end 2',3'-cyclophospho-ribonucleotide-RNA + H2O = a 3'-end 2'-phospho-ribonucleotide-RNA + H(+). Its function is as follows. Hydrolyzes RNA 2',3'-cyclic phosphodiester to an RNA 2'-phosphomonoester. The protein is RNA 2',3'-cyclic phosphodiesterase (ytlP) of Bacillus subtilis (strain 168).